We begin with the raw amino-acid sequence, 487 residues long: Cytochrome P450 2C16 (487 aa).

Position 432 (Cys-432) interacts with heme.

This sequence belongs to the cytochrome P450 family. Heme is required as a cofactor. As to expression, expressed constitutively in liver, lung, testes, and kidney.

The protein resides in the endoplasmic reticulum membrane. Its subcellular location is the microsome membrane. It carries out the reaction an organic molecule + reduced [NADPH--hemoprotein reductase] + O2 = an alcohol + oxidized [NADPH--hemoprotein reductase] + H2O + H(+). Cytochromes P450 are a group of heme-thiolate monooxygenases. In liver microsomes, this enzyme is involved in an NADPH-dependent electron transport pathway. It oxidizes a variety of structurally unrelated compounds, including steroids, fatty acids, and xenobiotics. This is Cytochrome P450 2C16 (CYP2C16) from Oryctolagus cuniculus (Rabbit).